A 308-amino-acid polypeptide reads, in one-letter code: Sulfoquinovosyl glycerol transport system permease protein SmoG (308 aa).

6 consecutive transmembrane segments (helical) span residues leucine 28–valine 48, valine 92–leucine 112, serine 126–phenylalanine 146, glycine 164–tryptophan 184, isoleucine 223–alanine 243, and leucine 279–valine 299. In terms of domain architecture, ABC transmembrane type-1 spans threonine 88–tyrosine 300.

The protein belongs to the binding-protein-dependent transport system permease family. As to quaternary structure, the complex is probably composed of two ATP-binding proteins (SmoE), two transmembrane proteins (SmoG and SmoH) and a solute-binding protein (SmoF).

The protein localises to the cell inner membrane. Part of the ABC transporter complex SmoEFGH involved in sulfoquinovosyl glycerol (SQGro) uptake. Responsible for the translocation of the substrate across the membrane. The polypeptide is Sulfoquinovosyl glycerol transport system permease protein SmoG (Agrobacterium fabrum (strain C58 / ATCC 33970) (Agrobacterium tumefaciens (strain C58))).